The primary structure comprises 307 residues: MAEISAALVKELREKTGAGMMDCKKALTETSGDMEAAVDWLRKKGLAAAAKKSGRVAAEGLVGVVAAPTAGACVEVNAETDFVARNETFQNFVAKVTELALTTGDDVEKLQSQPFPGTGRTVAEELTHLVATIGENMTIRRAARLSVTQGIVSTYMHSSLVPNLGKIGVLVALESAGDQAKLQELGKQIAMHIAAARPEALDIADVDPSKLNRERDVLADQARASGKPEEIVQKMVEGRVRKYYEEVVLLEQVFVVDGETKIRKVVENAGKTVGAPVKLTGFVRFALGEGIEKATSDFAAEVASMAG.

Residues 80–83 form an involved in Mg(2+) ion dislocation from EF-Tu region; the sequence is TDFV.

This sequence belongs to the EF-Ts family.

It is found in the cytoplasm. Functionally, associates with the EF-Tu.GDP complex and induces the exchange of GDP to GTP. It remains bound to the aminoacyl-tRNA.EF-Tu.GTP complex up to the GTP hydrolysis stage on the ribosome. The sequence is that of Elongation factor Ts from Rhodospirillum centenum (strain ATCC 51521 / SW).